The sequence spans 442 residues: Histidine--tRNA ligase (442 aa).

This sequence belongs to the class-II aminoacyl-tRNA synthetase family. Homodimer.

It localises to the cytoplasm. It carries out the reaction tRNA(His) + L-histidine + ATP = L-histidyl-tRNA(His) + AMP + diphosphate + H(+). In Rhodopirellula baltica (strain DSM 10527 / NCIMB 13988 / SH1), this protein is Histidine--tRNA ligase.